We begin with the raw amino-acid sequence, 492 residues long: NADH-quinone oxidoreductase subunit N (492 aa).

Helical transmembrane passes span 13 to 33 (MMTP…MDLF), 42 to 62 (PLAW…IGLI), 79 to 99 (FGKA…LLAF), 111 to 131 (GEFY…ASSG), 133 to 153 (LITL…LAGI), 168 to 188 (VING…IFGL), 211 to 231 (YILA…ISSV), 251 to 271 (FLSV…FITI), 284 to 304 (SLLF…MIIG), 318 to 340 (FAYS…SWVM), 344 to 366 (IWFY…QRIS), 388 to 408 (AVAM…AGFI), 426 to 446 (VLAA…FGIF), and 463 to 483 (PIGL…FGVV).

Belongs to the complex I subunit 2 family. NDH-1 is composed of 14 different subunits. Subunits NuoA, H, J, K, L, M, N constitute the membrane sector of the complex.

It localises to the cell membrane. It catalyses the reaction a quinone + NADH + 5 H(+)(in) = a quinol + NAD(+) + 4 H(+)(out). Its function is as follows. NDH-1 shuttles electrons from NADH, via FMN and iron-sulfur (Fe-S) centers, to quinones in the respiratory chain. The immediate electron acceptor for the enzyme in this species is believed to be a menaquinone. Couples the redox reaction to proton translocation (for every two electrons transferred, four hydrogen ions are translocated across the cytoplasmic membrane), and thus conserves the redox energy in a proton gradient. This is NADH-quinone oxidoreductase subunit N from Geobacillus sp. (strain WCH70).